The chain runs to 471 residues: Mannose-1-phosphate guanylyltransferase (471 aa).

The protein belongs to the mannose-6-phosphate isomerase type 2 family.

The catalysed reaction is alpha-D-mannose 1-phosphate + GTP + H(+) = GDP-alpha-D-mannose + diphosphate. The protein operates within nucleotide-sugar biosynthesis; GDP-alpha-D-mannose biosynthesis; GDP-alpha-D-mannose from alpha-D-mannose 1-phosphate (GTP route): step 1/1. Functionally, involved in GDP-mannose biosynthesis which serves as the activated sugar nucleotide precursor for mannose residues in cell surface polysaccharides. This enzyme participates in synthesis of the LPS O antigen. This Salmonella montevideo protein is Mannose-1-phosphate guanylyltransferase (manC).